A 501-amino-acid polypeptide reads, in one-letter code: Glycerol kinase (501 aa).

T17 contributes to the ADP binding site. Positions 17, 18, and 19 each coordinate ATP. T17 provides a ligand contact to sn-glycerol 3-phosphate. R21 provides a ligand contact to ADP. Sn-glycerol 3-phosphate contacts are provided by R87, E88, Y139, and D243. Residues R87, E88, Y139, D243, and Q244 each coordinate glycerol. ADP contacts are provided by T265 and G308. Residues T265, G308, Q312, and G409 each coordinate ATP. ADP-binding residues include G409 and N413.

The protein belongs to the FGGY kinase family.

It catalyses the reaction glycerol + ATP = sn-glycerol 3-phosphate + ADP + H(+). It participates in polyol metabolism; glycerol degradation via glycerol kinase pathway; sn-glycerol 3-phosphate from glycerol: step 1/1. Its activity is regulated as follows. Inhibited by fructose 1,6-bisphosphate (FBP). Functionally, key enzyme in the regulation of glycerol uptake and metabolism. Catalyzes the phosphorylation of glycerol to yield sn-glycerol 3-phosphate. This Pseudomonas syringae pv. tomato (strain ATCC BAA-871 / DC3000) protein is Glycerol kinase.